The chain runs to 21 residues: Peptide PGLa-R5 (21 aa).

Leu21 is modified (leucine amide).

Expressed by the skin glands.

It is found in the secreted. Functionally, antimicrobial peptide. In Xenopus ruwenzoriensis (Uganda clawed frog), this protein is Peptide PGLa-R5.